A 335-amino-acid polypeptide reads, in one-letter code: Olfactory receptor 9K2 (335 aa).

Topologically, residues 1–50 (MLGSKPRVHLYILPCASQQVSTMGDRGTSNHSEMTDFILAGFRVRPELHI) are extracellular. N30 is a glycosylation site (N-linked (GlcNAc...) asparagine). Residues 51–71 (LLFLLFLFVYAMILLGNVGMM) form a helical membrane-spanning segment. At 72-79 (TIIMTDPR) the chain is on the cytoplasmic side. The chain crosses the membrane as a helical span at residues 80-100 (LNTPMYFFLGNLSFIDLFYSS). Residues 101 to 124 (VIEPKAMINFWSENKSISFAGCVA) are Extracellular-facing. N-linked (GlcNAc...) asparagine glycosylation is present at N114. The cysteines at positions 122 and 214 are disulfide-linked. The chain crosses the membrane as a helical span at residues 125–145 (QLFLFALLIVTEGFLLAAMAY). At 146–164 (DRFIAICNPLLYSVQMSTR) the chain is on the cytoplasmic side. Residues 165 to 185 (LCTQLVAGSYFCGCISSVIQT) form a helical membrane-spanning segment. Residues 186–222 (SMTFTLSFCASRAVDHFYCDSRPLQRLSCSDLFIHRM) lie on the Extracellular side of the membrane. The helical transmembrane segment at 223–242 (ISFSLSCIIILPTIIVIIVS) threads the bilayer. At 243–262 (YMYIVSTVLKIHSTEGHKKA) the chain is on the cytoplasmic side. A helical transmembrane segment spans residues 263-283 (FSTCSSHLGVVSVLYGAVFFM). Over 284-296 (YLTPDRFPELSKV) the chain is Extracellular. At 316–335 (RNKDVQEALKKFLEKKNIIL) the chain is on the cytoplasmic side.

This sequence belongs to the G-protein coupled receptor 1 family.

The protein localises to the cell membrane. Odorant receptor. The polypeptide is Olfactory receptor 9K2 (OR9K2) (Homo sapiens (Human)).